The sequence spans 204 residues: Probable nicotinate-nucleotide adenylyltransferase (204 aa).

Belongs to the NadD family.

The catalysed reaction is nicotinate beta-D-ribonucleotide + ATP + H(+) = deamido-NAD(+) + diphosphate. It participates in cofactor biosynthesis; NAD(+) biosynthesis; deamido-NAD(+) from nicotinate D-ribonucleotide: step 1/1. Its function is as follows. Catalyzes the reversible adenylation of nicotinate mononucleotide (NaMN) to nicotinic acid adenine dinucleotide (NaAD). This is Probable nicotinate-nucleotide adenylyltransferase from Mycobacterium sp. (strain JLS).